We begin with the raw amino-acid sequence, 498 residues long: ATP synthase subunit beta, chloroplastic (498 aa).

Gly-172–Thr-179 is a binding site for ATP.

This sequence belongs to the ATPase alpha/beta chains family. As to quaternary structure, F-type ATPases have 2 components, CF(1) - the catalytic core - and CF(0) - the membrane proton channel. CF(1) has five subunits: alpha(3), beta(3), gamma(1), delta(1), epsilon(1). CF(0) has four main subunits: a(1), b(1), b'(1) and c(9-12).

It is found in the plastid. Its subcellular location is the chloroplast thylakoid membrane. It carries out the reaction ATP + H2O + 4 H(+)(in) = ADP + phosphate + 5 H(+)(out). Produces ATP from ADP in the presence of a proton gradient across the membrane. The catalytic sites are hosted primarily by the beta subunits. This Solanum bulbocastanum (Wild potato) protein is ATP synthase subunit beta, chloroplastic.